We begin with the raw amino-acid sequence, 150 residues long: Histone H3-like centromeric protein A (150 aa).

A disordered region spans residues 1–55 (MRPGSTPPSRRKSRPPRRVSPPLPTTSRTSPRRPHAQQQRRASRASPKKRFRPGT). Residues 41–53 (RASRASPKKRFRP) are compositionally biased toward basic residues. The tract at residues 53–150 (PGTRALMEIR…RIRGVNEGLG (98 aa)) is H3-like.

This sequence belongs to the histone H3 family. In terms of assembly, component of centromeric nucleosomes, where DNA is wrapped around a histone octamer core. The octamer contains two molecules each of H2A, H2B, CENPA and H4 assembled in one CENPA-H4 heterotetramer and two H2A-H2B heterodimers. CENPA modulates the DNA-binding characteristics of nucleosomes so that protruding DNA ends have higher flexibility than in nucleosomes containing conventional histone H3.

The protein resides in the nucleus. It localises to the chromosome. The protein localises to the centromere. In terms of biological role, histone H3-like nucleosomal protein that is specifically found in centromeric nucleosomes. Replaces conventional H3 in the nucleosome core of centromeric chromatin that serves as an assembly site for the inner kinetochore. The presence of CENPA subtly modifies the nucleosome structure and the way DNA is wrapped around the nucleosome and gives rise to protruding DNA ends that are less well-ordered and rigid compared to nucleosomes containing histone H3. May serve as an epigenetic mark that propagates centromere identity through replication and cell division. Required for recruitment and assembly of kinetochore proteins, and as a consequence required for progress through mitosis, chromosome segregation and cytokinesis. The sequence is that of Histone H3-like centromeric protein A (cenpa) from Xenopus laevis (African clawed frog).